The primary structure comprises 402 residues: Nicotinate phosphoribosyltransferase (402 aa).

A Phosphohistidine; by autocatalysis modification is found at histidine 226.

This sequence belongs to the NAPRTase family. In terms of processing, transiently phosphorylated on a His residue during the reaction cycle. Phosphorylation strongly increases the affinity for substrates and increases the rate of nicotinate D-ribonucleotide production. Dephosphorylation regenerates the low-affinity form of the enzyme, leading to product release.

It catalyses the reaction nicotinate + 5-phospho-alpha-D-ribose 1-diphosphate + ATP + H2O = nicotinate beta-D-ribonucleotide + ADP + phosphate + diphosphate. It functions in the pathway cofactor biosynthesis; NAD(+) biosynthesis; nicotinate D-ribonucleotide from nicotinate: step 1/1. Functionally, catalyzes the synthesis of beta-nicotinate D-ribonucleotide from nicotinate and 5-phospho-D-ribose 1-phosphate at the expense of ATP. The protein is Nicotinate phosphoribosyltransferase of Chromobacterium violaceum (strain ATCC 12472 / DSM 30191 / JCM 1249 / CCUG 213 / NBRC 12614 / NCIMB 9131 / NCTC 9757 / MK).